The primary structure comprises 219 residues: ATP synthase F(0) complex subunit a (219 aa).

6 helical membrane-spanning segments follow: residues 4 to 24, 61 to 81, 90 to 110, 124 to 144, 172 to 192, and 194 to 214; these read PTYLGIPLIAVALTLPWILFP, WAALLTSLMLFLITLNMLGLL, QLSLNMGLAVPLWLATVIIGM, EGTPVPLIPVLIIIETISLFI, FVLLPLMPTVAILTSIVLFLL, and LLEIAVAMIQAYVFVLLLSLY.

Belongs to the ATPase A chain family. Component of the ATP synthase complex composed at least of ATP5F1A/subunit alpha, ATP5F1B/subunit beta, ATP5MC1/subunit c (homooctomer), MT-ATP6/subunit a, MT-ATP8/subunit 8, ATP5ME/subunit e, ATP5MF/subunit f, ATP5MG/subunit g, ATP5MK/subunit k, ATP5MJ/subunit j, ATP5F1C/subunit gamma, ATP5F1D/subunit delta, ATP5F1E/subunit epsilon, ATP5PF/subunit F6, ATP5PB/subunit b, ATP5PD/subunit d, ATP5PO/subunit OSCP. ATP synthase complex consists of a soluble F(1) head domain (subunits alpha(3) and beta(3)) - the catalytic core - and a membrane F(0) domain - the membrane proton channel (subunits c, a, 8, e, f, g, k and j). These two domains are linked by a central stalk (subunits gamma, delta, and epsilon) rotating inside the F1 region and a stationary peripheral stalk (subunits F6, b, d, and OSCP). Interacts with DNAJC30; interaction is direct.

Its subcellular location is the mitochondrion inner membrane. The catalysed reaction is H(+)(in) = H(+)(out). In terms of biological role, subunit a, of the mitochondrial membrane ATP synthase complex (F(1)F(0) ATP synthase or Complex V) that produces ATP from ADP in the presence of a proton gradient across the membrane which is generated by electron transport complexes of the respiratory chain. ATP synthase complex consist of a soluble F(1) head domain - the catalytic core - and a membrane F(1) domain - the membrane proton channel. These two domains are linked by a central stalk rotating inside the F(1) region and a stationary peripheral stalk. During catalysis, ATP synthesis in the catalytic domain of F(1) is coupled via a rotary mechanism of the central stalk subunits to proton translocation. With the subunit c (ATP5MC1), forms the proton-conducting channel in the F(0) domain, that contains two crucial half-channels (inlet and outlet) that facilitate proton movement from the mitochondrial intermembrane space (IMS) into the matrix. Protons are taken up via the inlet half-channel and released through the outlet half-channel, following a Grotthuss mechanism. This chain is ATP synthase F(0) complex subunit a, found in Oncorhynchus masou (Cherry salmon).